Reading from the N-terminus, the 348-residue chain is Outer membrane protein assembly factor BamC (348 aa).

Positions 1–19 are cleaved as a signal peptide; it reads MKYSHQLVIGSLAVFVLTA. C20 is lipidated: N-palmitoyl cysteine. C20 carries the S-diacylglycerol cysteine lipid modification.

Belongs to the BamC family. As to quaternary structure, part of the Bam complex.

Its subcellular location is the cell outer membrane. Its function is as follows. Part of the outer membrane protein assembly complex, which is involved in assembly and insertion of beta-barrel proteins into the outer membrane. This Vibrio atlanticus (strain LGP32) (Vibrio splendidus (strain Mel32)) protein is Outer membrane protein assembly factor BamC.